We begin with the raw amino-acid sequence, 243 residues long: 3-deoxy-manno-octulosonate cytidylyltransferase (243 aa).

The protein belongs to the KdsB family.

The protein localises to the cytoplasm. It carries out the reaction 3-deoxy-alpha-D-manno-oct-2-ulosonate + CTP = CMP-3-deoxy-beta-D-manno-octulosonate + diphosphate. It functions in the pathway nucleotide-sugar biosynthesis; CMP-3-deoxy-D-manno-octulosonate biosynthesis; CMP-3-deoxy-D-manno-octulosonate from 3-deoxy-D-manno-octulosonate and CTP: step 1/1. It participates in bacterial outer membrane biogenesis; lipopolysaccharide biosynthesis. Functionally, activates KDO (a required 8-carbon sugar) for incorporation into bacterial lipopolysaccharide in Gram-negative bacteria. This is 3-deoxy-manno-octulosonate cytidylyltransferase from Bartonella bacilliformis (strain ATCC 35685 / KC583 / Herrer 020/F12,63).